We begin with the raw amino-acid sequence, 31 residues long: Cytochrome b6-f complex subunit 6 (31 aa).

Residues 3–23 form a helical membrane-spanning segment; sequence IITSYFGFLLTALTIASALFI.

The protein belongs to the PetL family. The 4 large subunits of the cytochrome b6-f complex are cytochrome b6, subunit IV (17 kDa polypeptide, PetD), cytochrome f and the Rieske protein, while the 4 small subunits are PetG, PetL, PetM and PetN. The complex functions as a dimer.

The protein localises to the plastid. Its subcellular location is the chloroplast thylakoid membrane. Component of the cytochrome b6-f complex, which mediates electron transfer between photosystem II (PSII) and photosystem I (PSI), cyclic electron flow around PSI, and state transitions. PetL is important for photoautotrophic growth as well as for electron transfer efficiency and stability of the cytochrome b6-f complex. The polypeptide is Cytochrome b6-f complex subunit 6 (Helianthus annuus (Common sunflower)).